Reading from the N-terminus, the 432-residue chain is FAD-dependent monooxygenase pynG (432 aa).

4 residues coordinate FAD: Glu-32, Arg-103, Asp-315, and Ala-328.

It belongs to the paxM FAD-dependent monooxygenase family. FAD is required as a cofactor.

The protein operates within secondary metabolite biosynthesis. In terms of biological role, FAD-dependent monooxygenase; part of the gene cluster that mediates the biosynthesis of pyranonigrins, a family of antioxidative compounds. The first step of pyranonigrins biosynthesis is performed by the hybrid PKS-NRPS synthetase that condenses 6 malonyl-CoA units to an acetyl starter unit, to form a 1,3,5-trioxotetradecane-6,8-dienyl-ACP. The enoyl reductase (ER) domain of pynA is likely to be functional during the first two rounds of polyketide chain extension, to generate the saturated C-C bonds of the alkyl side chain. PynA subsequently forms the amide bond between the acyl chain and L-serine. Although pynA has a terminal reductase domain, it appears to require the thioesterase pynI for the release of the straight-chain intermediate from pynA via the formation of a tetramic acid pyranonigrin J. The methyltransferase pynC then coverts pyranonigrin J to pyranonigrin I via N-methylation. The FAD-dependent monooxygenase pynG catalyzes an epoxidation-mediated cyclization to form the dihydro-gamma-pyrone moiety, followed by pynD-catalyzed oxidation of the alcohol to the ketone and enolization to yield the characteristic tetramic acid-fused gamma-pyrone core of pyranonigrin H. Pyranonigrin H is substrate of pynH for dehydration-mediated exo-methylene formation from the serine side chain to produce pyranonigrin E, before the oxidase pynE reduces the exo-methylene of pyranonigrin E into a pendant methyl to form pyranonigrin G. The FAD-linked oxidoreductase pynB performs the reverse reaction and converts pyranonigrin G back to pyranonigrin E. The chain is FAD-dependent monooxygenase pynG from Aspergillus niger (strain ATCC MYA-4892 / CBS 513.88 / FGSC A1513).